The following is a 124-amino-acid chain: Small ribosomal subunit protein bS6 (124 aa).

Residues 98-124 (EASPMLKAREERPRREDVREEAEEAAE) form a disordered region. Over residues 104–115 (KAREERPRREDV) the composition is skewed to basic and acidic residues.

The protein belongs to the bacterial ribosomal protein bS6 family.

In terms of biological role, binds together with bS18 to 16S ribosomal RNA. This is Small ribosomal subunit protein bS6 from Tolumonas auensis (strain DSM 9187 / NBRC 110442 / TA 4).